The following is a 202-amino-acid chain: ATP-dependent Clp protease proteolytic subunit 1 (202 aa).

The active-site Nucleophile is the Ser-101. His-126 is a catalytic residue.

This sequence belongs to the peptidase S14 family. As to quaternary structure, fourteen ClpP subunits assemble into 2 heptameric rings which stack back to back to give a disk-like structure with a central cavity, resembling the structure of eukaryotic proteasomes.

Its subcellular location is the cytoplasm. The catalysed reaction is Hydrolysis of proteins to small peptides in the presence of ATP and magnesium. alpha-casein is the usual test substrate. In the absence of ATP, only oligopeptides shorter than five residues are hydrolyzed (such as succinyl-Leu-Tyr-|-NHMec, and Leu-Tyr-Leu-|-Tyr-Trp, in which cleavage of the -Tyr-|-Leu- and -Tyr-|-Trp bonds also occurs).. Functionally, cleaves peptides in various proteins in a process that requires ATP hydrolysis. Has a chymotrypsin-like activity. Plays a major role in the degradation of misfolded proteins. This Rhizobium etli (strain ATCC 51251 / DSM 11541 / JCM 21823 / NBRC 15573 / CFN 42) protein is ATP-dependent Clp protease proteolytic subunit 1.